A 201-amino-acid polypeptide reads, in one-letter code: Transmembrane 4 L6 family member 18 (201 aa).

At 1–9 the chain is on the cytoplasmic side; it reads MGSRKCGGC. A helical membrane pass occupies residues 10–30; it reads LSCLLIPLALWSIIVNILLYF. At 31–49 the chain is on the extracellular side; sequence PNGQTSYASSNKLTNYVWY. A helical transmembrane segment spans residues 50–70; it reads FEGICFSGIMMLIVTTVLLVL. At 71–93 the chain is on the cytoplasmic side; sequence ENNNNYKCCQSENCSKKYVTLLS. A helical membrane pass occupies residues 94–114; it reads IIFSSLGIAFSGYCLVISALG. Residues 115–157 lie on the Extracellular side of the membrane; sequence LVQGPYCRTLDGWEYAFEGTAGRFLTDSSIWIQCLEPAHVVEW. The helical transmembrane segment at 158–178 threads the bilayer; that stretch reads NIILFSILITLSGLQVIICLI. Residues 179–201 lie on the Cytoplasmic side of the membrane; sequence RVVMQLSKILCGSYSVIFQPGII.

The protein belongs to the L6 tetraspanin family.

The protein localises to the membrane. The chain is Transmembrane 4 L6 family member 18 (TM4SF18) from Homo sapiens (Human).